Reading from the N-terminus, the 281-residue chain is General control transcription factor GCN4 (281 aa).

Ser17 bears the Phosphoserine mark. Required for transcriptional activation stretches follow at residues 89 to 100 (LDDAVVESFFSS) and 106 to 125 (PMFE…SLFD). The residue at position 165 (Thr165) is a Phosphothreonine; by PHO85. The short motif at 167–200 (VLEDAKLTQTRKVKKPNSVVKKSHHVGKDDESRL) is the Nuclear localization signal element. Positions 217 to 248 (LSPIVPESSDPAALKRARNTEAARRSRARKLQ) are disordered. Phosphoserine is present on Ser218. The 57-residue stretch at 225 to 281 (SDPAALKRARNTEAARRSRARKLQRMKQLEDKVEELLSKNYHLENEVARLKKLVGER) folds into the bZIP domain. A Nuclear localization signal motif is present at residues 231-249 (KRARNTEAARRSRARKLQR). A basic motif region spans residues 231 to 251 (KRARNTEAARRSRARKLQRMK). Residues 253–274 (LEDKVEELLSKNYHLENEVARL) form a leucine-zipper region.

It belongs to the bZIP family. GCN4 subfamily. Homodimer. Each subunit binds overlapping and non-identical half-sites that flank the central CG base-pair in the pseudo-palindromic motif 5'-ATGA[CG]TCAT-3'. Interacts with the mediator tail; the interaction with GAL11/MED15 is direct. Interacts with the SAGA histone acetyltransferase complex. Interacts with the SWI/SNF chromatin remodeling complex. Post-translationally, phosphorylated by the cyclin-CDK PCL5-PHO85. Phosphorylation of Thr-165 induces degradation of GCN4 by the E3 ubiquitin ligase complex SCF(Cdc4).

The protein resides in the nucleus. Master transcriptional regulator that mediates the response to amino acid starvation. Binds variations of the DNA sequence 5'-ATGA[CG]TCAT-3' in canonical nucleosome-depleted 5'-positioned promoters, and also within coding sequences and 3' non-coding regions. During nutrient starvation (low or poor amino acid, carbon or purine sources), it activates genes required for amino acid biosynthesis and transport, autophagy, cofactor biosynthesis and transport, mitochondrial transport, and additional downstream transcription factors. Activates transcription by recruiting multiple coactivators, including the mediator complex, the SAGA complex, and the SWI/SNF complex, to enable assembly of the pre-initiation complex at core promoters. The polypeptide is General control transcription factor GCN4 (Saccharomyces cerevisiae (strain ATCC 204508 / S288c) (Baker's yeast)).